The primary structure comprises 149 residues: Leghemoglobin (149 aa).

Residues alanine 3–glycine 147 enclose the Globin domain. Tyrosine 31 bears the Nitrated tyrosine mark. Serine 46 is a binding site for heme b. The residue at position 46 (serine 46) is a Phosphoserine. O2 is bound at residue histidine 62. The heme b site is built by lysine 65, histidine 94, and lysine 97. Residue tyrosine 135 is modified to Nitrated tyrosine.

Belongs to the plant globin family. Monomer. Nitrated in effective nodules and particularly in hypoxic conditions; this mechanism may play a protective role in the symbiosis by buffering toxic peroxynitrite NO(2)(-). Nitration level decrease during nodule senescence. Post-translationally, phosphorylation at Ser-46 disrupts the molecular environment of its porphyrin ring oxygen binding pocket, thus leading to a reduced oxygen consumption and to the delivery of oxygen O(2) to symbiosomes. Root nodules.

It is found in the cytoplasm. The protein localises to the cytosol. It localises to the nucleus. Its function is as follows. Leghemoglobin that reversibly binds oxygen O(2) through a pentacoordinated heme iron. In root nodules, facilitates the diffusion of oxygen to the bacteroids while preventing the bacterial nitrogenase from being inactivated by buffering dioxygen, nitric oxide and carbon monoxide, and promoting the formation of reactive oxygen species (ROS, e.g. H(2)O(2)). This role is essential for symbiotic nitrogen fixation (SNF). The chain is Leghemoglobin from Canavalia lineata (Beach bean).